We begin with the raw amino-acid sequence, 132 residues long: Cytochrome c-554 (132 aa).

Residues 1–24 (MKSISMLTLAASVAFAVTAGQAVA) form the signal peptide. Residues 26–126 (GDPAAGEKVF…NVWAYLSQFG (101 aa)) enclose the Cytochrome c domain. The heme c site is built by C38, C41, H42, and M104.

In terms of processing, binds 1 heme c group covalently per subunit.

The protein localises to the periplasm. In Methylosinus trichosporium, this protein is Cytochrome c-554.